The following is a 692-amino-acid chain: Elongation factor G (692 aa).

A tr-type G domain is found at 8-282 (EKTRNIGIMA…AVLDYLPAPT (275 aa)). Residues 17 to 24 (AHIDAGKT), 81 to 85 (DTPGH), and 135 to 138 (NKMD) each bind GTP.

Belongs to the TRAFAC class translation factor GTPase superfamily. Classic translation factor GTPase family. EF-G/EF-2 subfamily.

It is found in the cytoplasm. Its function is as follows. Catalyzes the GTP-dependent ribosomal translocation step during translation elongation. During this step, the ribosome changes from the pre-translocational (PRE) to the post-translocational (POST) state as the newly formed A-site-bound peptidyl-tRNA and P-site-bound deacylated tRNA move to the P and E sites, respectively. Catalyzes the coordinated movement of the two tRNA molecules, the mRNA and conformational changes in the ribosome. The sequence is that of Elongation factor G from Bacillus velezensis (strain DSM 23117 / BGSC 10A6 / LMG 26770 / FZB42) (Bacillus amyloliquefaciens subsp. plantarum).